Here is a 91-residue protein sequence, read N- to C-terminus: Putative regulatory protein PTH_1796 (91 aa).

This sequence belongs to the RemA family.

The chain is Putative regulatory protein PTH_1796 from Pelotomaculum thermopropionicum (strain DSM 13744 / JCM 10971 / SI).